Here is a 150-residue protein sequence, read N- to C-terminus: uncharacterized protein (150 aa).

The next 4 membrane-spanning stretches (helical) occupy residues 32 to 52 (ILYG…AVSL), 64 to 84 (FNWL…FISG), 94 to 114 (IGAL…YLGF), and 123 to 143 (LIFH…GVNM).

The protein resides in the cell membrane. This is an uncharacterized protein from Bacillus subtilis (strain 168).